Reading from the N-terminus, the 428-residue chain is GTPase Obg (428 aa).

One can recognise an Obg domain in the interval 1–158 (MFVDQVQVEV…RFIKLELKVL (158 aa)). An OBG-type G domain is found at 159-333 (ADVGLVGFPS…LMHKTAEVLK (175 aa)). GTP contacts are provided by residues 165 to 172 (GFPSVGKS), 190 to 194 (FTTLV), 212 to 215 (DLPG), 282 to 285 (TKMD), and 314 to 316 (SSL). The Mg(2+) site is built by S172 and T192. The region spanning 350 to 428 (YKYQPEPALK…IDDFTFEFVE (79 aa)) is the OCT domain.

It belongs to the TRAFAC class OBG-HflX-like GTPase superfamily. OBG GTPase family. Monomer. Mg(2+) is required as a cofactor.

It is found in the cytoplasm. Its function is as follows. An essential GTPase which binds GTP, GDP and possibly (p)ppGpp with moderate affinity, with high nucleotide exchange rates and a fairly low GTP hydrolysis rate. Plays a role in control of the cell cycle, stress response, ribosome biogenesis and in those bacteria that undergo differentiation, in morphogenesis control. The sequence is that of GTPase Obg from Lacticaseibacillus paracasei (strain ATCC 334 / BCRC 17002 / CCUG 31169 / CIP 107868 / KCTC 3260 / NRRL B-441) (Lactobacillus paracasei).